Here is a 411-residue protein sequence, read N- to C-terminus: Serpin A3-1 (411 aa).

The first 24 residues, 1-24 (MRAERTSFLLALGLLVAGIRSVHC), serve as a signal peptide directing secretion. N100, N180, N230, and N264 each carry an N-linked (GlcNAc...) asparagine glycan.

Belongs to the serpin family. As to quaternary structure, homodimer. Post-translationally, N-glycosylated. Detected in all tissues examined (at protein level). Abundantly expressed in liver, kidney and spleen. Lowest levels were observed in diaphragm muscle.

The protein localises to the cytoplasmic vesicle. The protein resides in the secretory vesicle. It localises to the chromaffin granule. It is found in the secreted. Its function is as follows. Potent inhibitor of the serine proteases elastase and trypsin. Moderately inhibits the serine proteases plasmin and chymotrypsin, and the thiol protease proenkephalin-processing enzyme. Does not inhibit the serine proteases cathepsin G, furin, kallikrein, thrombin, tissue plasminogen activator and urokinase, or the cysteine proteases cathepsin B, cathepsin L and papain. The sequence is that of Serpin A3-1 from Bos taurus (Bovine).